We begin with the raw amino-acid sequence, 255 residues long: Triosephosphate isomerase (255 aa).

N9–K11 provides a ligand contact to substrate. Catalysis depends on H95, which acts as the Electrophile. The Proton acceptor role is filled by E167. Residues G173, S212, and G233–G234 each bind substrate.

Belongs to the triosephosphate isomerase family. In terms of assembly, homodimer.

Its subcellular location is the cytoplasm. It carries out the reaction D-glyceraldehyde 3-phosphate = dihydroxyacetone phosphate. The protein operates within carbohydrate biosynthesis; gluconeogenesis. It participates in carbohydrate degradation; glycolysis; D-glyceraldehyde 3-phosphate from glycerone phosphate: step 1/1. In terms of biological role, involved in the gluconeogenesis. Catalyzes stereospecifically the conversion of dihydroxyacetone phosphate (DHAP) to D-glyceraldehyde-3-phosphate (G3P). The sequence is that of Triosephosphate isomerase from Klebsiella pneumoniae.